The sequence spans 661 residues: Acetyl-coenzyme A synthetase (661 aa).

CoA-binding positions include 199-202 (RGGK) and threonine 317. Residues 393–395 (GEP), 417–422 (DTFWQT), aspartate 508, and arginine 523 each bind ATP. Serine 531 contributes to the CoA binding site. An ATP-binding site is contributed by arginine 534. Arginine 596 lines the CoA pocket.

This sequence belongs to the ATP-dependent AMP-binding enzyme family.

The catalysed reaction is acetate + ATP + CoA = acetyl-CoA + AMP + diphosphate. The polypeptide is Acetyl-coenzyme A synthetase (ACS-1) (Coprinopsis cinerea (Inky cap fungus)).